Here is a 127-residue protein sequence, read N- to C-terminus: Large-conductance mechanosensitive channel (127 aa).

The next 3 helical transmembrane spans lie at 8–28 (FAFKGNVLDLAIGVIIGAAFG), 30–50 (IVTALVDVVIMPIISIILSLI), and 70–90 (IGVLIKTIIEFLIIAFVLFLF).

It belongs to the MscL family. As to quaternary structure, homopentamer.

The protein localises to the cell membrane. Channel that opens in response to stretch forces in the membrane lipid bilayer. May participate in the regulation of osmotic pressure changes within the cell. The polypeptide is Large-conductance mechanosensitive channel (Herpetosiphon aurantiacus (strain ATCC 23779 / DSM 785 / 114-95)).